Reading from the N-terminus, the 602-residue chain is Elongation factor 4 (602 aa).

Residues 7–189 (SKIRNFCIIA…AIVRRVPAPQ (183 aa)) form the tr-type G domain. GTP is bound by residues 19–24 (DHGKST) and 136–139 (NKVD).

Belongs to the TRAFAC class translation factor GTPase superfamily. Classic translation factor GTPase family. LepA subfamily.

The protein localises to the cell inner membrane. It catalyses the reaction GTP + H2O = GDP + phosphate + H(+). Required for accurate and efficient protein synthesis under certain stress conditions. May act as a fidelity factor of the translation reaction, by catalyzing a one-codon backward translocation of tRNAs on improperly translocated ribosomes. Back-translocation proceeds from a post-translocation (POST) complex to a pre-translocation (PRE) complex, thus giving elongation factor G a second chance to translocate the tRNAs correctly. Binds to ribosomes in a GTP-dependent manner. The polypeptide is Elongation factor 4 (Prochlorococcus marinus (strain MIT 9312)).